The chain runs to 161 residues: Cyclic pyranopterin monophosphate synthase (161 aa).

Substrate-binding positions include 75–77 (LCH) and 113–114 (ME). Asp-128 is an active-site residue.

Belongs to the MoaC family. Homohexamer; trimer of dimers.

It carries out the reaction (8S)-3',8-cyclo-7,8-dihydroguanosine 5'-triphosphate = cyclic pyranopterin phosphate + diphosphate. It functions in the pathway cofactor biosynthesis; molybdopterin biosynthesis. In terms of biological role, catalyzes the conversion of (8S)-3',8-cyclo-7,8-dihydroguanosine 5'-triphosphate to cyclic pyranopterin monophosphate (cPMP). The sequence is that of Cyclic pyranopterin monophosphate synthase from Cupriavidus pinatubonensis (strain JMP 134 / LMG 1197) (Cupriavidus necator (strain JMP 134)).